The chain runs to 396 residues: L-lactate dehydrogenase (396 aa).

The 380-residue stretch at 1-380 folds into the FMN hydroxy acid dehydrogenase domain; it reads MIISAASDYR…TQDSLVQGLG (380 aa). A substrate-binding site is contributed by Y24. Positions 106 and 127 each coordinate FMN. Residue Y129 coordinates substrate. Position 155 (T155) interacts with FMN. R164 is a binding site for substrate. K251 is a binding site for FMN. The active-site Proton acceptor is H275. R278 contributes to the substrate binding site. An FMN-binding site is contributed by 306–330; it reads DSGIRNGLDVVRMIALGADTVLLGR.

This sequence belongs to the FMN-dependent alpha-hydroxy acid dehydrogenase family. Requires FMN as cofactor.

It localises to the cell inner membrane. It catalyses the reaction (S)-lactate + A = pyruvate + AH2. In terms of biological role, catalyzes the conversion of L-lactate to pyruvate. Is coupled to the respiratory chain. This Shigella boydii serotype 18 (strain CDC 3083-94 / BS512) protein is L-lactate dehydrogenase.